A 198-amino-acid chain; its full sequence is Large ribosomal subunit protein bL9 (198 aa).

Over residues 156–166 (RGEDISTRQED) the composition is skewed to basic and acidic residues. The segment at 156-198 (RGEDISTRQEDQDAAAEALAAAGEFFDPEAHNDGEQEEEAGDK) is disordered.

The protein belongs to the bacterial ribosomal protein bL9 family.

Its function is as follows. Binds to the 23S rRNA. The chain is Large ribosomal subunit protein bL9 from Rhodopseudomonas palustris (strain BisB18).